A 434-amino-acid polypeptide reads, in one-letter code: 5'-deoxyadenosine deaminase (434 aa).

Zn(2+) contacts are provided by H63 and H65. 2 residues coordinate substrate: E92 and H184. Residue H211 participates in Zn(2+) binding. E214 and D299 together coordinate substrate. D299 is a binding site for Zn(2+).

Belongs to the metallo-dependent hydrolases superfamily. MTA/SAH deaminase family. In terms of assembly, homotetramer. The cofactor is Zn(2+).

The enzyme catalyses 5'-deoxyadenosine + H2O + H(+) = 5'-deoxyinosine + NH4(+). The catalysed reaction is S-adenosyl-L-homocysteine + H2O + H(+) = S-inosyl-L-homocysteine + NH4(+). It catalyses the reaction S-methyl-5'-thioadenosine + H2O + H(+) = S-methyl-5'-thioinosine + NH4(+). It carries out the reaction adenosine + H2O + H(+) = inosine + NH4(+). It functions in the pathway amino-acid biosynthesis; S-adenosyl-L-methionine biosynthesis. In terms of biological role, catalyzes the deamination of three SAM-derived enzymatic products, namely 5'-deoxyadenosine, S-adenosyl-L-homocysteine, and 5'-methylthioadenosine, to produce the inosine analogs. Can also deaminate adenosine. The preferred substrate for this enzyme is 5'-deoxyadenosine, but all these substrates are efficiently deaminated. Likely functions in a S-adenosyl-L-methionine (SAM) recycling pathway from S-adenosyl-L-homocysteine (SAH) produced from SAM-dependent methylation reactions. May also be involved in the recycling of 5'-deoxyadenosine, whereupon the 5'-deoxyribose moiety of 5'-deoxyinosine is further metabolized to deoxyhexoses used for the biosynthesis of aromatic amino acids in methanogens. The sequence is that of 5'-deoxyadenosine deaminase from Methanococcoides burtonii (strain DSM 6242 / NBRC 107633 / OCM 468 / ACE-M).